A 236-amino-acid chain; its full sequence is 2,3,4,5-tetrahydropyridine-2,6-dicarboxylate N-acetyltransferase (236 aa).

Belongs to the transferase hexapeptide repeat family. DapH subfamily.

It carries out the reaction (S)-2,3,4,5-tetrahydrodipicolinate + acetyl-CoA + H2O = L-2-acetamido-6-oxoheptanedioate + CoA. Its pathway is amino-acid biosynthesis; L-lysine biosynthesis via DAP pathway; LL-2,6-diaminopimelate from (S)-tetrahydrodipicolinate (acetylase route): step 1/3. Catalyzes the transfer of an acetyl group from acetyl-CoA to tetrahydrodipicolinate. The sequence is that of 2,3,4,5-tetrahydropyridine-2,6-dicarboxylate N-acetyltransferase from Clostridium botulinum (strain Eklund 17B / Type B).